A 343-amino-acid polypeptide reads, in one-letter code: Dehydrodolichyl diphosphate synthase complex subunit SRT1 (343 aa).

It belongs to the UPP synthase family. As to quaternary structure, forms an active dehydrodolichyl diphosphate synthase complex with NUS1. It depends on Mg(2+) as a cofactor.

The protein resides in the lipid droplet. It catalyses the reaction n isopentenyl diphosphate + (2E,6E)-farnesyl diphosphate = a di-trans,poly-cis-polyprenyl diphosphate + n diphosphate. Its pathway is protein modification; protein glycosylation. In terms of biological role, with NUS1, forms the dehydrodolichyl diphosphate synthase (DDS) complex, an essential component of the dolichol monophosphate (Dol-P) biosynthetic machinery. Adds multiple copies of isopentenyl pyrophosphate (IPP) to farnesyl pyrophosphate (FPP) to produce dehydrodolichyl diphosphate (Dedol-PP), a precursor of dolichol which is utilized as a sugar carrier in protein glycosylation in the endoplasmic reticulum (ER). The protein is Dehydrodolichyl diphosphate synthase complex subunit SRT1 of Saccharomyces cerevisiae (strain ATCC 204508 / S288c) (Baker's yeast).